Consider the following 142-residue polypeptide: MRIINADGLILGRLASRVAKMLLEGEEVVIVNAEKAVITGNREVIFSKYKQRTGLRTLTNPRRGPFYPKRSDEIVRRTIRGMLPWKTDRGRKAFRRLKVYVGIPKEFQDKQLETIVEAHVSRLSRPKYVTVGEVAKFLGGKF.

This sequence belongs to the universal ribosomal protein uL13 family. Part of the 50S ribosomal subunit.

This protein is one of the early assembly proteins of the 50S ribosomal subunit, although it is not seen to bind rRNA by itself. It is important during the early stages of 50S assembly. The chain is Large ribosomal subunit protein uL13 from Pyrococcus horikoshii (strain ATCC 700860 / DSM 12428 / JCM 9974 / NBRC 100139 / OT-3).